The following is a 208-amino-acid chain: Small ribosomal subunit protein uS4 (208 aa).

One can recognise an S4 RNA-binding domain in the interval 95–159 (TIIDNIVYRA…LKKLIGSNIE (65 aa)).

The protein belongs to the universal ribosomal protein uS4 family. Part of the 30S ribosomal subunit. Contacts protein S5. The interaction surface between S4 and S5 is involved in control of translational fidelity.

In terms of biological role, one of the primary rRNA binding proteins, it binds directly to 16S rRNA where it nucleates assembly of the body of the 30S subunit. With S5 and S12 plays an important role in translational accuracy. The protein is Small ribosomal subunit protein uS4 of Borreliella afzelii (strain PKo) (Borrelia afzelii).